The chain runs to 451 residues: SH2 domain-containing protein 7 (451 aa).

The SH2 domain occupies 51-142 (WFHGFITRKQ…PFKEMLTAAC (92 aa)). Disordered regions lie at residues 180–232 (KAAS…SLLE), 256–321 (LGTE…SDAM), and 408–436 (GTPELSEPGNTYEQIPATKSKETGRTHKP). A compositionally biased stretch (low complexity) spans 221–232 (SPLPEKSSSLLE). Positions 279–291 (EAQRRLSDGEQNR) are enriched in basic and acidic residues. Residues 306 to 316 (QGPTESPTSWG) are compositionally biased toward polar residues. Basic and acidic residues predominate over residues 426 to 436 (KSKETGRTHKP).

The chain is SH2 domain-containing protein 7 (SH2D7) from Homo sapiens (Human).